Here is a 389-residue protein sequence, read N- to C-terminus: Homoserine O-acetyltransferase (389 aa).

The segment at 1–21 (MAALRAGKTNNEADQPSSPVL) is disordered. A compositionally biased stretch (polar residues) spans 8-18 (KTNNEADQPSS). Positions 56-366 (NAILVCHALT…DRGHDAFLLD (311 aa)) constitute an AB hydrolase-1 domain. Residue serine 161 is the Nucleophile of the active site. Substrate is bound at residue arginine 231. Residues aspartate 327 and histidine 360 contribute to the active site. Position 361 (aspartate 361) interacts with substrate.

The protein belongs to the AB hydrolase superfamily. MetX family. Homodimer.

The protein resides in the cytoplasm. It carries out the reaction L-homoserine + acetyl-CoA = O-acetyl-L-homoserine + CoA. The protein operates within amino-acid biosynthesis; L-methionine biosynthesis via de novo pathway; O-acetyl-L-homoserine from L-homoserine: step 1/1. In terms of biological role, transfers an acetyl group from acetyl-CoA to L-homoserine, forming acetyl-L-homoserine. This is Homoserine O-acetyltransferase from Mesorhizobium japonicum (strain LMG 29417 / CECT 9101 / MAFF 303099) (Mesorhizobium loti (strain MAFF 303099)).